A 382-amino-acid polypeptide reads, in one-letter code: uncharacterized protein (382 aa).

The first 25 residues, 1–25 (MKKWMAAVFVMMLMLCFGGIENVKA), serve as a signal peptide directing secretion. The active-site Nucleophile is serine 186. Active-site residues include aspartate 354 and histidine 357.

Belongs to the 'GDSL' lipolytic enzyme family.

This is an uncharacterized protein from Bacillus subtilis (strain 168).